The primary structure comprises 424 residues: Kynurenine--oxoglutarate transaminase 1 (424 aa).

Glycine 36 contacts substrate. At lysine 82 the chain carries N6-succinyllysine. Asparagine 185 serves as a coordination point for substrate. Lysine 247 carries the N6-(pyridoxal phosphate)lysine modification. Residue arginine 398 coordinates substrate. Lysine 413 is subject to N6-succinyllysine.

The protein belongs to the class-I pyridoxal-phosphate-dependent aminotransferase family. As to quaternary structure, homodimer. The cofactor is pyridoxal 5'-phosphate.

Its subcellular location is the cytoplasm. The protein localises to the cytosol. The catalysed reaction is L-kynurenine + 2-oxoglutarate = kynurenate + L-glutamate + H2O. It catalyses the reaction 3-phenylpyruvate + L-glutamine = 2-oxoglutaramate + L-phenylalanine. The enzyme catalyses an S-substituted L-cysteine + H2O = a thiol + pyruvate + NH4(+). It participates in amino-acid degradation; L-kynurenine degradation; kynurenate from L-kynurenine: step 1/2. Catalyzes the irreversible transamination of the L-tryptophan metabolite L-kynurenine to form kynurenic acid (KA), an intermediate in the tryptophan catabolic pathway which is also a broad spectrum antagonist of the three ionotropic excitatory amino acid receptors among others. Metabolizes the cysteine conjugates of certain halogenated alkenes and alkanes to form reactive metabolites. Catalyzes the beta-elimination of S-conjugates and Se-conjugates of L-(seleno)cysteine, resulting in the cleavage of the C-S or C-Se bond. The protein is Kynurenine--oxoglutarate transaminase 1 (Kyat1) of Mus musculus (Mouse).